A 464-amino-acid polypeptide reads, in one-letter code: Protein FAM90A1 (464 aa).

Disordered stretches follow at residues 1-43, 71-294, 312-386, 412-437, and 445-464; these read MMAR…PRLK, PNFG…KRSA, PFQI…AASH, PSFH…SEGP, and VLYE…SDLE. Composition is skewed to basic and acidic residues over residues 74–83 and 97–114; these read GEKEGKENLK and NKDK…DPQR. Positions 180–197 are enriched in low complexity; it reads LASLSPLRKASLSSSSSL. The segment covering 344–355 has biased composition (polar residues); the sequence is TSPQTGTRTPAQ.

This sequence belongs to the FAM90 family.

This is Protein FAM90A1 (FAM90A1) from Homo sapiens (Human).